A 55-amino-acid polypeptide reads, in one-letter code: ATP synthase F(0) complex subunit 8 (55 aa).

A helical membrane pass occupies residues 7-24 (NPWFYIMLMSWLTFSLII). The interval 35–55 (NPPSNKTSTTTRTLPWTWPWT) is disordered. A compositionally biased stretch (low complexity) spans 41-55 (TSTTTRTLPWTWPWT).

It belongs to the ATPase protein 8 family. In terms of assembly, component of the ATP synthase complex composed at least of ATP5F1A/subunit alpha, ATP5F1B/subunit beta, ATP5MC1/subunit c (homooctomer), MT-ATP6/subunit a, MT-ATP8/subunit 8, ATP5ME/subunit e, ATP5MF/subunit f, ATP5MG/subunit g, ATP5MK/subunit k, ATP5MJ/subunit j, ATP5F1C/subunit gamma, ATP5F1D/subunit delta, ATP5F1E/subunit epsilon, ATP5PF/subunit F6, ATP5PB/subunit b, ATP5PD/subunit d, ATP5PO/subunit OSCP. ATP synthase complex consists of a soluble F(1) head domain (subunits alpha(3) and beta(3)) - the catalytic core - and a membrane F(0) domain - the membrane proton channel (subunits c, a, 8, e, f, g, k and j). These two domains are linked by a central stalk (subunits gamma, delta, and epsilon) rotating inside the F1 region and a stationary peripheral stalk (subunits F6, b, d, and OSCP).

The protein localises to the mitochondrion membrane. Subunit 8, of the mitochondrial membrane ATP synthase complex (F(1)F(0) ATP synthase or Complex V) that produces ATP from ADP in the presence of a proton gradient across the membrane which is generated by electron transport complexes of the respiratory chain. ATP synthase complex consist of a soluble F(1) head domain - the catalytic core - and a membrane F(1) domain - the membrane proton channel. These two domains are linked by a central stalk rotating inside the F(1) region and a stationary peripheral stalk. During catalysis, ATP synthesis in the catalytic domain of F(1) is coupled via a rotary mechanism of the central stalk subunits to proton translocation. In vivo, can only synthesize ATP although its ATP hydrolase activity can be activated artificially in vitro. Part of the complex F(0) domain. In Corythaixoides concolor (Grey go-away-bird), this protein is ATP synthase F(0) complex subunit 8.